Consider the following 436-residue polypeptide: Glutamyl-tRNA reductase (436 aa).

Substrate contacts are provided by residues 49–52, Ser-109, 114–116, and Gln-120; these read TCNR and EGQ. The active-site Nucleophile is Cys-50. An NADP(+)-binding site is contributed by 198 to 203; the sequence is GAGRMS.

It belongs to the glutamyl-tRNA reductase family. As to quaternary structure, homodimer.

It carries out the reaction (S)-4-amino-5-oxopentanoate + tRNA(Glu) + NADP(+) = L-glutamyl-tRNA(Glu) + NADPH + H(+). Its pathway is porphyrin-containing compound metabolism; protoporphyrin-IX biosynthesis; 5-aminolevulinate from L-glutamyl-tRNA(Glu): step 1/2. It functions in the pathway porphyrin-containing compound metabolism; chlorophyll biosynthesis. In terms of biological role, catalyzes the NADPH-dependent reduction of glutamyl-tRNA(Glu) to glutamate 1-semialdehyde (GSA). This Prochlorococcus marinus (strain AS9601) protein is Glutamyl-tRNA reductase.